The primary structure comprises 132 residues: Small ribosomal subunit protein uS8 (132 aa).

It belongs to the universal ribosomal protein uS8 family. As to quaternary structure, part of the 30S ribosomal subunit. Contacts proteins S5 and S12.

In terms of biological role, one of the primary rRNA binding proteins, it binds directly to 16S rRNA central domain where it helps coordinate assembly of the platform of the 30S subunit. This Xylella fastidiosa (strain M23) protein is Small ribosomal subunit protein uS8.